The following is a 313-amino-acid chain: CBK1 kinase activator protein MOB2 (313 aa).

Positions 1-109 (MSFLNTIRGL…KRSSIQTTKS (109 aa)) are disordered. Positions 23–69 (PSNNAIYSHSNLSGNGLRRTQSPTKFSPSKLSSKGAQGSAAYTSSPT) are enriched in polar residues. 4 positions are modified to phosphoserine; by CDC28: Ser-44, Ser-51, Ser-67, and Ser-97. The span at 76–97 (QSLQHQDSQSSLQYQQQSGSVS) shows a compositional bias: low complexity. Positions 98-109 (PSKRSSIQTTKS) are enriched in polar residues.

This sequence belongs to the MOB1/phocein family. Interacts with protein kinase CBK1 to form the RAM CBK1-MOB2 kinase complex. Post-translationally, phosphorylated by CDC28 at Ser-44, Ser-51, Ser-67, and Ser-97. Phosphorylation occurs during bud emergence and is maintained until the G2/M transition. Dephosphorylated at the end of mitosis. Phosphorylation is required for the maintenance of polarisome components in hyphae.

It is found in the nucleus. Its subcellular location is the cytoplasm. Functions as an activator subunit for the CBK1 protein kinase. Part of the regulation of ACE2 activity and cellular morphogenesis (RAM) signaling network. The RAM network is critically required for hyphal growth as well as normal vegetative growth, and for polarization of lipid rafts and the actin cytoskeleton. It play an essential role in biofilm formation. The RAM network also plays a role in serum- and antifungal azoles-induced activation of ergosterol biosynthesis genes, especially those involved in the late steps of ergosterol biosynthesis. The protein is CBK1 kinase activator protein MOB2 (MOB2) of Candida albicans (strain SC5314 / ATCC MYA-2876) (Yeast).